The chain runs to 867 residues: E3 ubiquitin-protein ligase SH3RF1 (867 aa).

The RING-type zinc finger occupies 12 to 53 (CPVCLERLDATAKVLPCQHTFCRRCLLGIVGSRGELRCPECR). Positions 101 to 127 (AQGAGGSQRDPGPTGGQSQRVQAKSTP) are disordered. The segment covering 116-125 (GQSQRVQAKS) has biased composition (polar residues). 2 SH3 domains span residues 132 to 191 (PQLP…VIKP) and 194 to 257 (QPPP…FNSA). The disordered stretch occupies residues 265–328 (DKPSEGGGDS…PPPQRHSMEI (64 aa)). The segment covering 275–285 (SEGPSSSSSGP) has biased composition (low complexity). The 62-residue stretch at 436 to 497 (QRPTVYVAMF…PGNYMSPVSR (62 aa)) folds into the SH3 3 domain. The segment at 706–794 (LSNKKKLRPS…APIAPPPRQP (89 aa)) is disordered. The segment covering 760–769 (SELSMSSSSS) has biased composition (low complexity). Residues 770-784 (NTDAVTHRSSPQDNT) show a composition bias toward polar residues. One can recognise an SH3 4 domain in the interval 808–867 (IVCERYRVVVSYPPQSEAELELKEGDIVFVHKKREDGWFKGTLQRNGRTGLFPGSFVDSI).

This sequence belongs to the SH3RF family. Post-translationally, autoubiquitinated. Ubiquitinated by SH3RF2, leading to proteasome-mediated degradation.

The protein localises to the cytoplasm. The protein resides in the perinuclear region. It localises to the cell projection. Its subcellular location is the lamellipodium. It is found in the golgi apparatus. The protein localises to the trans-Golgi network. It catalyses the reaction S-ubiquitinyl-[E2 ubiquitin-conjugating enzyme]-L-cysteine + [acceptor protein]-L-lysine = [E2 ubiquitin-conjugating enzyme]-L-cysteine + N(6)-ubiquitinyl-[acceptor protein]-L-lysine.. It participates in protein modification; protein ubiquitination. Functionally, has E3 ubiquitin-protein ligase activity. In the absence of an external substrate, it can catalyze self-ubiquitination. Acts as a scaffold protein that contributes to the effective activation of the JNK signaling pathway. This chain is E3 ubiquitin-protein ligase SH3RF1 (sh3rf1), found in Danio rerio (Zebrafish).